Here is a 124-residue protein sequence, read N- to C-terminus: Putative transmembrane protein FLJ36131 (124 aa).

Residues 1–2 (MY) are Cytoplasmic-facing. A helical transmembrane segment spans residues 3–23 (VSISFLLGLSHLVLCCLLTFI). At 24–124 (VNFYLPPESI…LLTTTSYSVS (101 aa)) the chain is on the extracellular side. An N-linked (GlcNAc...) asparagine glycan is attached at asparagine 41.

The protein localises to the membrane. This chain is Putative transmembrane protein FLJ36131, found in Homo sapiens (Human).